The primary structure comprises 609 residues: Granule-bound starch synthase 1, chloroplastic/amyloplastic (609 aa).

Residues 1-77 (MSALTTSQLA…SRRFPSVVVY (77 aa)) constitute a chloroplast transit peptide. The segment at 29-67 (RHGFQGLKPRSPAGGDATSLSVTTSARATPKQQRSVQRG) is disordered. Over residues 46-66 (TSLSVTTSARATPKQQRSVQR) the composition is skewed to polar residues. Lys-97 provides a ligand contact to ADP-alpha-D-glucose.

Belongs to the glycosyltransferase 1 family. Bacterial/plant glycogen synthase subfamily.

The protein localises to the plastid. It localises to the chloroplast. It is found in the amyloplast. It carries out the reaction an NDP-alpha-D-glucose + [(1-&gt;4)-alpha-D-glucosyl](n) = [(1-&gt;4)-alpha-D-glucosyl](n+1) + a ribonucleoside 5'-diphosphate + H(+). The protein operates within glycan biosynthesis; starch biosynthesis. Functionally, required for the synthesis of amylose in endosperm. The sequence is that of Granule-bound starch synthase 1, chloroplastic/amyloplastic (WAXY) from Oryza glaberrima (African rice).